A 299-amino-acid polypeptide reads, in one-letter code: MDLVLSAADYYFFTPYVYPATWPEDNIIRQTVSLLVVTNLGAYILYFFCATLSYYFVYDHSLMKHPQFLKNQVSREIMFTVKSLPWISIPTVSLFLLELRGYSKLYDDIGDFPNGWIHLIMSVISFLFFTDMLIYWIHRGLHHRLLYKHIHKPHHIWKIPTPFASHAFHPVDGFLQSLPYHIYPFVFPLHKVVYLGLYVLVNVWTISIHDGDFRVPQIFRPFINGSAHHTDHHMLFDYNYGQYFTLWDRIGGSFKHPSSFEGKGPHSYVKNMTEKESNSLAENGCKSKKLCNGEFTKNE.

A run of 3 helical transmembrane segments spans residues 32–52 (VSLL…CATL), 79–99 (FTVK…LLEL), and 117–137 (IHLI…IYWI). The Fatty acid hydroxylase domain occupies 124 to 252 (ISFLFFTDML…YFTLWDRIGG (129 aa)). Positions 138–143 (HRGLHH) match the Histidine box-1 motif. The Histidine box-2 motif lies at 151 to 155 (HKPHH). The Histidine box-3 signature appears at 228-233 (HHTDHH). At Ser253 the chain carries Phosphoserine.

It belongs to the sterol desaturase family. Requires Fe cation as cofactor.

Its subcellular location is the endoplasmic reticulum membrane. The enzyme catalyses a Delta(7)-sterol + 2 Fe(II)-[cytochrome b5] + O2 + 2 H(+) = a Delta(5),Delta(7)-sterol + 2 Fe(III)-[cytochrome b5] + 2 H2O. The catalysed reaction is lathosterol + 2 Fe(II)-[cytochrome b5] + O2 + 2 H(+) = 7-dehydrocholesterol + 2 Fe(III)-[cytochrome b5] + 2 H2O. It catalyses the reaction 5alpha-cholesta-7,24-dien-3beta-ol + 2 Fe(II)-[cytochrome b5] + O2 + 2 H(+) = 7-dehydrodesmosterol + 2 Fe(III)-[cytochrome b5] + 2 H2O. It functions in the pathway steroid biosynthesis; cholesterol biosynthesis. Catalyzes the penultimate step of the biosynthesis of cholesterol, the dehydrogenation of lathosterol into 7-dehydrocholesterol (7-DHC). Cholesterol is the major sterol component in mammalian membranes and a precursor for bile acid and steroid hormone synthesis. In addition to its essential role in cholesterol biosynthesis, it also indirectly regulates ferroptosis through the production of 7-DHC. By diverting the spread of damage caused by peroxyl radicals from the phospholipid components to its sterol nucleus, 7-DHC prevents this form of cell death. This Rattus norvegicus (Rat) protein is Lathosterol oxidase.